Reading from the N-terminus, the 187-residue chain is Elongation factor P (187 aa).

Belongs to the elongation factor P family.

Its subcellular location is the cytoplasm. Its pathway is protein biosynthesis; polypeptide chain elongation. Involved in peptide bond synthesis. Stimulates efficient translation and peptide-bond synthesis on native or reconstituted 70S ribosomes in vitro. Probably functions indirectly by altering the affinity of the ribosome for aminoacyl-tRNA, thus increasing their reactivity as acceptors for peptidyl transferase. This is Elongation factor P from Erythrobacter litoralis (strain HTCC2594).